The primary structure comprises 84 residues: NADH-ubiquinone oxidoreductase chain 4L (84 aa).

Helical transmembrane passes span 7 to 29 and 50 to 70; these read ILLL…EILL and IFSI…LSIL.

The protein belongs to the complex I subunit 4L family.

It localises to the mitochondrion membrane. The enzyme catalyses a ubiquinone + NADH + 5 H(+)(in) = a ubiquinol + NAD(+) + 4 H(+)(out). Core subunit of the mitochondrial membrane respiratory chain NADH dehydrogenase (Complex I) that is believed to belong to the minimal assembly required for catalysis. Complex I functions in the transfer of electrons from NADH to the respiratory chain. The immediate electron acceptor for the enzyme is believed to be ubiquinone. The polypeptide is NADH-ubiquinone oxidoreductase chain 4L (ND4L) (Candida parapsilosis (Yeast)).